Consider the following 160-residue polypeptide: SsrA-binding protein (160 aa).

Belongs to the SmpB family.

The protein resides in the cytoplasm. Required for rescue of stalled ribosomes mediated by trans-translation. Binds to transfer-messenger RNA (tmRNA), required for stable association of tmRNA with ribosomes. tmRNA and SmpB together mimic tRNA shape, replacing the anticodon stem-loop with SmpB. tmRNA is encoded by the ssrA gene; the 2 termini fold to resemble tRNA(Ala) and it encodes a 'tag peptide', a short internal open reading frame. During trans-translation Ala-aminoacylated tmRNA acts like a tRNA, entering the A-site of stalled ribosomes, displacing the stalled mRNA. The ribosome then switches to translate the ORF on the tmRNA; the nascent peptide is terminated with the 'tag peptide' encoded by the tmRNA and targeted for degradation. The ribosome is freed to recommence translation, which seems to be the essential function of trans-translation. The sequence is that of SsrA-binding protein from Yersinia enterocolitica serotype O:8 / biotype 1B (strain NCTC 13174 / 8081).